The following is a 172-amino-acid chain: Adenylate kinase isoenzyme 6 (172 aa).

The ATP site is built by G13, G15, K16, T17, and T18. The tract at residues 33–56 (NVGDLAREEQLYDGYDEEYDCPIL) is NMP. The interval 33–56 (NVGDLAREEQLYDGYDEEYDCPIL) is NMPbind. The tract at residues 108 to 118 (TRGYNEKKLTD) is LID. Residues R109 and K148 each contribute to the ATP site.

The protein belongs to the adenylate kinase family. AK6 subfamily. In terms of assembly, monomer and homodimer. Interacts with small ribosomal subunit protein uS11. Not a structural component of 43S pre-ribosomes, but transiently interacts with them by binding to uS11. Interacts with COIL (via C-terminus). Expressed in heart, brain, placenta, lung, liver, skeletal muscle, kidney, pancreas, chorionic villi and the central nervous system.

Its subcellular location is the cytoplasm. It localises to the nucleus. The protein localises to the nucleoplasm. The protein resides in the cajal body. The catalysed reaction is AMP + ATP = 2 ADP. It catalyses the reaction ATP + H2O = ADP + phosphate + H(+). Its function is as follows. Broad-specificity nucleoside monophosphate (NMP) kinase that catalyzes the reversible transfer of the terminal phosphate group between nucleoside triphosphates and monophosphates. Also has ATPase activity. Involved in the late cytoplasmic maturation steps of the 40S ribosomal particles, specifically 18S rRNA maturation. While NMP activity is not required for ribosome maturation, ATPase activity is. Associates transiently with small ribosomal subunit protein uS11. ATP hydrolysis breaks the interaction with uS11. May temporarily remove uS11 from the ribosome to enable a conformational change of the ribosomal RNA that is needed for the final maturation step of the small ribosomal subunit. Its NMP activity may have a role in nuclear energy homeostasis. AMP and dAMP are the preferred substrates, but CMP and dCMP are also good substrates. IMP is phosphorylated to a much lesser extent. All nucleoside triphosphates ATP, GTP, UTP, CTP, dATP, dCTP, dGTP, and TTP are accepted as phosphate donors. CTP is the best phosphate donor, followed by UTP, ATP, GTP and dCTP. May be involved in regulation of Cajal body (CB) formation. This chain is Adenylate kinase isoenzyme 6, found in Homo sapiens (Human).